The chain runs to 282 residues: Aldo-keto reductase ML1669 (282 aa).

Tyr-57 serves as the catalytic Proton donor. 8 residues coordinate NADPH: Leu-197, Val-235, Arg-237, Ser-238, Ala-239, Ser-246, Asn-247, and Arg-273.

The protein belongs to the aldo/keto reductase family.

The protein is Aldo-keto reductase ML1669 of Mycobacterium leprae (strain TN).